Reading from the N-terminus, the 327-residue chain is Thiamine thiazole synthase (327 aa).

Residues Cys-86, 107–108 (EA), Gly-115, and Val-182 contribute to the substrate site. Residue Cys-216 is modified to 2,3-didehydroalanine (Cys). Substrate is bound by residues Asp-218, His-233, Met-285, and 295–297 (RMG).

This sequence belongs to the THI4 family. In terms of assembly, homooctamer. Fe cation serves as cofactor. In terms of processing, during the catalytic reaction, a sulfide is transferred from Cys-216 to a reaction intermediate, generating a dehydroalanine residue.

The protein localises to the cytoplasm. The protein resides in the nucleus. It carries out the reaction [ADP-thiazole synthase]-L-cysteine + glycine + NAD(+) = [ADP-thiazole synthase]-dehydroalanine + ADP-5-ethyl-4-methylthiazole-2-carboxylate + nicotinamide + 3 H2O + 2 H(+). Involved in biosynthesis of the thiamine precursor thiazole. Catalyzes the conversion of NAD and glycine to adenosine diphosphate 5-(2-hydroxyethyl)-4-methylthiazole-2-carboxylic acid (ADT), an adenylated thiazole intermediate. The reaction includes an iron-dependent sulfide transfer from a conserved cysteine residue of the protein to a thiazole intermediate. The enzyme can only undergo a single turnover, which suggests it is a suicide enzyme. May have additional roles in adaptation to various stress conditions and in DNA damage tolerance. This chain is Thiamine thiazole synthase, found in Aspergillus oryzae (strain ATCC 42149 / RIB 40) (Yellow koji mold).